The primary structure comprises 1047 residues: Ubiquitin carboxyl-terminal hydrolase 28 (1047 aa).

Disordered stretches follow at residues 60–95 and 110–138; these read DQEP…DPEK and SPKA…RCEV. Residues 94 to 113 form the UIM domain; it reads EKKGDVHSAVAYGQLESPKA. A compositionally biased stretch (basic and acidic residues) spans 111-128; the sequence is PKAHAAERPQEVHSPEHK. Residues 156–651 form the USP domain; it reads VGMKNIGNTC…SAYCLMYISD (496 aa). Cysteine 165 (nucleophile) is an active-site residue. A compositionally biased stretch (polar residues) spans 461-486; sequence STEDSQMMDRQSQGESLILGTPSQPD. The segment at 461-528 is disordered; that stretch reads STEDSQMMDR…SEPPAEMSDC (68 aa). A compositionally biased stretch (basic and acidic residues) spans 489–498; that stretch reads LDGKDGKPED. A compositionally biased stretch (polar residues) spans 504-516; the sequence is ANSSPQQQLNAPL. The active-site Proton acceptor is histidine 601. Positions 694 to 735 are disordered; that stretch reads EAEEWEEEQSCKIPSTASESQELSPESGLDPPAAHEQSLRSL. Residues 705 to 717 show a composition bias toward polar residues; it reads KIPSTASESQELS.

This sequence belongs to the peptidase C19 family. USP28 subfamily.

Its subcellular location is the nucleus. It is found in the nucleoplasm. It catalyses the reaction Thiol-dependent hydrolysis of ester, thioester, amide, peptide and isopeptide bonds formed by the C-terminal Gly of ubiquitin (a 76-residue protein attached to proteins as an intracellular targeting signal).. Deubiquitinase involved in DNA damage response checkpoint and MYC proto-oncogene stability. Involved in DNA damage induced apoptosis by specifically deubiquitinating proteins of the DNA damage pathway such as CLSPN. Also involved in G2 DNA damage checkpoint, by deubiquitinating CLSPN, and preventing its degradation by the anaphase promoting complex/cyclosome (APC/C). Specifically deubiquitinates MYC in the nucleoplasm, leading to prevent MYC degradation by the proteasome. Deubiquitinates ZNF304, hence may prevent ZNF304 degradation by the proteasome, leading to the activated KRAS-mediated promoter hypermethylation and transcriptional silencing of tumor suppressor genes (TSGs). This chain is Ubiquitin carboxyl-terminal hydrolase 28 (USP28), found in Gallus gallus (Chicken).